A 115-amino-acid polypeptide reads, in one-letter code: Beta-2-microglobulin (115 aa).

An N-terminal signal peptide occupies residues 1-18 (MGLLICSLLLGLLCCSMA). The 92-residue stretch at 23 to 114 (PKVEVYTREP…KSKDHFLMIG (92 aa)) folds into the Ig-like C1-type domain.

The protein belongs to the beta-2-microglobulin family. In terms of assembly, heterodimer of an alpha chain and a beta chain. Beta-2-microglobulin is the beta-chain of major histocompatibility complex class I molecules.

It localises to the secreted. Its function is as follows. Component of the class I major histocompatibility complex (MHC). Involved in the presentation of peptide antigens to the immune system. This Paralichthys olivaceus (Bastard halibut) protein is Beta-2-microglobulin (b2m).